The following is a 406-amino-acid chain: Kelch domain-containing protein 2 (406 aa).

6 Kelch repeats span residues 31–85, 92–136, 148–207, 221–259, 271–311, and 322–359; these read ERSG…NTEG, SGSC…ERID, LGVW…AWSQ, HACATVGNKGFVFGGRYRDARMNDLHYLNLDTWEWNELI, HSLT…IQFN, and HTACASDEGEVIVFGGCANNLLVHHRAAHSNEVLIFSV.

As to quaternary structure, component of a CRL2(KLHDC2) E3 ubiquitin-protein ligase complex, also named ECS(KLHDC2) complex, composed of CUL2, Elongin BC (ELOB and ELOC), RBX1 and substrate-specific adapter KLHDC2. May form oligomers as a KLHDC2-ELOB-ELOC complex; this interaction is autoinhibitory for the E3 ligase complex as the substrate-binding site of KLHDC2 is blocked in the oligomer. Interacts with CREB3; interaction is direct and specific as it does not interact with CREB1, ATF4, ATF6, JUN, FOS, CEBPA or herpes simplex virus transactivator VP16. Autoubiquitinated by the CRL2(KLHDC2) E3 ligase complex.

Its subcellular location is the nucleus. Its pathway is protein modification; protein ubiquitination. Its function is as follows. Substrate-recognition component of a Cul2-RING (CRL2) E3 ubiquitin-protein ligase complex of the DesCEND (destruction via C-end degrons) pathway, which recognizes a C-degron located at the extreme C terminus of target proteins, leading to their ubiquitination and degradation. The C-degron recognized by the DesCEND pathway is usually a motif of less than ten residues and can be present in full-length proteins, truncated proteins or proteolytically cleaved forms. The CRL2(KLHDC2) complex specifically recognizes proteins with a diglycine (Gly-Gly) at the C-terminus, leading to their ubiquitination and degradation. The CRL2(KLHDC2) complex mediates ubiquitination and degradation of truncated SELENOK and SELENOS selenoproteins produced by failed UGA/Sec decoding, which end with a diglycine. The CRL2(KLHDC2) complex also recognizes proteolytically cleaved proteins ending with Gly-Gly, such as the N-terminal fragment of USP1, leading to their degradation. May also act as an indirect repressor of CREB3-mediated transcription by interfering with CREB3-DNA-binding. This chain is Kelch domain-containing protein 2, found in Mus musculus (Mouse).